Reading from the N-terminus, the 76-residue chain is Sec-independent protein translocase protein TatA (76 aa).

The helical transmembrane segment at 1–21 threads the bilayer; sequence MGGISIWQLLIIVAIIVLLFG. The interval 43–76 is disordered; it reads MADDKSQPQDASFEKVEAKEAASTEQKAKEKEQA.

It belongs to the TatA/E family. In terms of assembly, the Tat system comprises two distinct complexes: a TatABC complex, containing multiple copies of TatA, TatB and TatC subunits, and a separate TatA complex, containing only TatA subunits. Substrates initially bind to the TatABC complex, which probably triggers association of the separate TatA complex to form the active translocon.

It is found in the cell inner membrane. Its function is as follows. Part of the twin-arginine translocation (Tat) system that transports large folded proteins containing a characteristic twin-arginine motif in their signal peptide across membranes. TatA could form the protein-conducting channel of the Tat system. This Actinobacillus pleuropneumoniae serotype 5b (strain L20) protein is Sec-independent protein translocase protein TatA.